The following is a 388-amino-acid chain: MKLMETLNQCINAGHEMTKAIAIAQFNDDSPEARKITRRWRIGEAADLVGVSSQAIRDAEKAGRLPHPDMEIRGRVEQRVGYTIEQINHMRDVFGTRLRRAEDVFPPVIGVAAHKGGVYKTSVSVHLAQDLALKGLRVLLVEGNDPQGTASMYHGWVPDLHIHAEDTLLPFYLGEKDDVTYAIKPTCWPGLDIIPSCLALHRIETELMGKFDEGKLPTDPHLMLRLAIETVAHDYDVIVIDSAPNLGIGTINVVCAADVLIVPTPAELFDYTSALQFFDMLRDLLKNVDLKGFEPDVRILLTKYSNSNGSQSPWMEEQIRDAWGSMVLKNVVRETDEVGKGQIRMRTVFEQAIDQRSSTGAWRNALSIWEPVCNEIFDRLIKPRWEIR.

The protein belongs to the ParA family.

This protein is essential for plasmid partition. It ensures the proper distribution of newly replicated plasmids to daughter cells during cell division. SopA is trans-acting. In Escherichia coli O157:H7, this protein is Protein SopA (sopA).